We begin with the raw amino-acid sequence, 419 residues long: Histidine--tRNA ligase (419 aa).

It belongs to the class-II aminoacyl-tRNA synthetase family. In terms of assembly, homodimer.

It is found in the cytoplasm. It catalyses the reaction tRNA(His) + L-histidine + ATP = L-histidyl-tRNA(His) + AMP + diphosphate + H(+). The protein is Histidine--tRNA ligase of Desulforamulus reducens (strain ATCC BAA-1160 / DSM 100696 / MI-1) (Desulfotomaculum reducens).